The chain runs to 310 residues: Acetyl-coenzyme A carboxylase carboxyl transferase subunit alpha (310 aa).

Residues 31–285 enclose the CoA carboxyltransferase C-terminal domain; sequence SFERELRIIN…KQKILRRLKQ (255 aa).

This sequence belongs to the AccA family. Acetyl-CoA carboxylase is a heterohexamer composed of biotin carboxyl carrier protein (accB), biotin carboxylase (accC) and two subunits each of ACCase subunit alpha (accA) and ACCase subunit beta (accD).

Its subcellular location is the plastid. It localises to the chloroplast. The enzyme catalyses N(6)-carboxybiotinyl-L-lysyl-[protein] + acetyl-CoA = N(6)-biotinyl-L-lysyl-[protein] + malonyl-CoA. Its pathway is lipid metabolism; malonyl-CoA biosynthesis; malonyl-CoA from acetyl-CoA: step 1/1. Its function is as follows. Component of the acetyl coenzyme A carboxylase (ACC) complex. First, biotin carboxylase catalyzes the carboxylation of biotin on its carrier protein (BCCP) and then the CO(2) group is transferred by the carboxyltransferase to acetyl-CoA to form malonyl-CoA. This chain is Acetyl-coenzyme A carboxylase carboxyl transferase subunit alpha, found in Cyanidioschyzon merolae (strain NIES-3377 / 10D) (Unicellular red alga).